Here is a 530-residue protein sequence, read N- to C-terminus: Phosphoenolpyruvate carboxykinase (ATP) (530 aa).

3 residues coordinate substrate: Arg56, Tyr196, and Lys202. ATP contacts are provided by residues Lys202, His221, and 237-245; that span reads GLSGTGKTT. Mn(2+) is bound by residues Lys202 and His221. Residue Asp258 participates in Mn(2+) binding. Residues Glu286, Arg322, 438–439, and Thr444 contribute to the ATP site; that span reads RI. Arg322 contacts substrate.

Belongs to the phosphoenolpyruvate carboxykinase (ATP) family. As to quaternary structure, monomer. It depends on Mn(2+) as a cofactor.

Its subcellular location is the cytoplasm. It carries out the reaction oxaloacetate + ATP = phosphoenolpyruvate + ADP + CO2. It participates in carbohydrate biosynthesis; gluconeogenesis. In terms of biological role, involved in the gluconeogenesis. Catalyzes the conversion of oxaloacetate (OAA) to phosphoenolpyruvate (PEP) through direct phosphoryl transfer between the nucleoside triphosphate and OAA. The polypeptide is Phosphoenolpyruvate carboxykinase (ATP) (Photobacterium profundum (strain SS9)).